A 252-amino-acid chain; its full sequence is Phosphate import ATP-binding protein PstB (252 aa).

Positions 6–247 (IEVKNLNTYF…PKNKQTENYI (242 aa)) constitute an ABC transporter domain. 38-45 (GPSGCGKS) lines the ATP pocket.

Belongs to the ABC transporter superfamily. Phosphate importer (TC 3.A.1.7) family. In terms of assembly, the complex is composed of two ATP-binding proteins (PstB), two transmembrane proteins (PstC and PstA) and a solute-binding protein (PstS).

Its subcellular location is the cell membrane. It carries out the reaction phosphate(out) + ATP + H2O = ADP + 2 phosphate(in) + H(+). Its function is as follows. Part of the ABC transporter complex PstSACB involved in phosphate import. Responsible for energy coupling to the transport system. In Methanosphaera stadtmanae (strain ATCC 43021 / DSM 3091 / JCM 11832 / MCB-3), this protein is Phosphate import ATP-binding protein PstB.